We begin with the raw amino-acid sequence, 353 residues long: UPF0283 membrane protein YcjF (353 aa).

Residues 1-19 (MSEPLKPRIDFAEPLKEEP) are compositionally biased toward basic and acidic residues. The tract at residues 1–35 (MSEPLKPRIDFAEPLKEEPTSAFKAQQTFSEAESR) is disordered. Transmembrane regions (helical) follow at residues 70–90 (MVMG…VQWT), 100–120 (VALG…GSVV), and 213–233 (ESTL…FIAW).

This sequence belongs to the UPF0283 family.

It localises to the cell inner membrane. The chain is UPF0283 membrane protein YcjF from Salmonella enteritidis PT4 (strain P125109).